The primary structure comprises 135 residues: Small ribosomal subunit protein uS11 (135 aa).

Over residues 1-10 (MPPKSRTATA) the composition is skewed to polar residues. Disordered regions lie at residues 1-27 (MPPK…HGHA) and 114-135 (GAIQ…RRRV). The segment covering 12–27 (RKPRRKEKKNVAHGHA) has biased composition (basic residues).

This sequence belongs to the universal ribosomal protein uS11 family. As to quaternary structure, part of the 30S ribosomal subunit. Interacts with proteins S7 and S18. Binds to IF-3.

Its function is as follows. Located on the platform of the 30S subunit, it bridges several disparate RNA helices of the 16S rRNA. Forms part of the Shine-Dalgarno cleft in the 70S ribosome. The protein is Small ribosomal subunit protein uS11 of Kineococcus radiotolerans (strain ATCC BAA-149 / DSM 14245 / SRS30216).